Here is a 338-residue protein sequence, read N- to C-terminus: O-methyltransferase 4 (338 aa).

Residues glycine 184, aspartate 207, asparagine 230, phenylalanine 231, lysine 244, and arginine 245 each contribute to the S-adenosyl-L-methionine site. Catalysis depends on histidine 248, which acts as the Proton acceptor.

This sequence belongs to the class I-like SAM-binding methyltransferase superfamily. Cation-independent O-methyltransferase family. COMT subfamily.

It catalyses the reaction (3,5-dichloro-2,4,6-trihydroxyphenyl)hexan-1-one + S-adenosyl-L-methionine = 1-(3,5-dichloro-2,6-dihydroxy-4-methoxyphenyl)hexan-1-one + S-adenosyl-L-homocysteine + H(+). The chain is O-methyltransferase 4 (omt4) from Dictyostelium discoideum (Social amoeba).